A 100-amino-acid chain; its full sequence is Co-chaperonin GroES (100 aa).

This sequence belongs to the GroES chaperonin family. In terms of assembly, heptamer of 7 subunits arranged in a ring. Interacts with the chaperonin GroEL.

It is found in the cytoplasm. In terms of biological role, together with the chaperonin GroEL, plays an essential role in assisting protein folding. The GroEL-GroES system forms a nano-cage that allows encapsulation of the non-native substrate proteins and provides a physical environment optimized to promote and accelerate protein folding. GroES binds to the apical surface of the GroEL ring, thereby capping the opening of the GroEL channel. In Mycobacterium tuberculosis (strain CDC 1551 / Oshkosh), this protein is Co-chaperonin GroES.